The sequence spans 196 residues: Glycerol-3-phosphate acyltransferase (196 aa).

The next 5 membrane-spanning stretches (helical) occupy residues 1–21 (MIIFTATLIIILAYFLGSISG), 55–75 (IAIFVLLFDSLKGAVPIWLGT), 81–101 (PIYLYIIAISACIGHIYPIYF), 118–138 (AISINFFIIIIITWILTVYLF), and 140–160 (YASLGSIVTFIVITFYVWYIQ).

This sequence belongs to the PlsY family. Probably interacts with PlsX.

The protein localises to the cell inner membrane. The enzyme catalyses an acyl phosphate + sn-glycerol 3-phosphate = a 1-acyl-sn-glycero-3-phosphate + phosphate. It participates in lipid metabolism; phospholipid metabolism. Catalyzes the transfer of an acyl group from acyl-phosphate (acyl-PO(4)) to glycerol-3-phosphate (G3P) to form lysophosphatidic acid (LPA). This enzyme utilizes acyl-phosphate as fatty acyl donor, but not acyl-CoA or acyl-ACP. The sequence is that of Glycerol-3-phosphate acyltransferase from Blochmanniella floridana.